Consider the following 362-residue polypeptide: Dihydroorotate dehydrogenase (quinone) (362 aa).

FMN contacts are provided by residues 62 to 66 (AGYDK) and T86. K66 serves as a coordination point for substrate. 111-115 (NRLGF) is a binding site for substrate. Residues N139 and N170 each coordinate FMN. Residue N170 participates in substrate binding. S173 acts as the Nucleophile in catalysis. N175 serves as a coordination point for substrate. Positions 215 and 243 each coordinate FMN. Substrate is bound at residue 244-245 (NT). Residues G266, G295, and 316–317 (YS) contribute to the FMN site.

This sequence belongs to the dihydroorotate dehydrogenase family. Type 2 subfamily. Monomer. It depends on FMN as a cofactor.

It localises to the cell membrane. The enzyme catalyses (S)-dihydroorotate + a quinone = orotate + a quinol. It functions in the pathway pyrimidine metabolism; UMP biosynthesis via de novo pathway; orotate from (S)-dihydroorotate (quinone route): step 1/1. In terms of biological role, catalyzes the conversion of dihydroorotate to orotate with quinone as electron acceptor. This chain is Dihydroorotate dehydrogenase (quinone), found in Rhizobium meliloti (strain 1021) (Ensifer meliloti).